Here is a 456-residue protein sequence, read N- to C-terminus: Cell adhesion molecule 1 (456 aa).

Residues 1-47 (MASAVLPSGSQCAAAAAVAAAAAPPGLRLRLLLLLLSAAALIPTGDG) form the signal peptide. An Ig-like V-type domain is found at 48 to 142 (QNLFTKDVTV…PPQESYTTIT (95 aa)). Over 48 to 388 (QNLFTKDVTV…EEGTIGAVDH (341 aa)) the chain is Extracellular. Cysteines 67 and 127 form a disulfide. Asn-70, Asn-104, Asn-116, and Asn-168 each carry an N-linked (GlcNAc...) asparagine glycan. Ig-like C2-type domains follow at residues 147 to 241 (PRNL…RYLE) and 246 to 332 (PQVH…YMLY). 2 disulfide bridges follow: Cys-169/Cys-223 and Cys-270/Cys-316. Asn-307 and Asn-311 each carry an N-linked (GlcNAc...) asparagine glycan. The helical transmembrane segment at 389–409 (AVIGGVVAVVVFAMLCLLIIL) threads the bilayer. The Cytoplasmic portion of the chain corresponds to 410 to 456 (GRYFARHKGTYFTHEAKGADDAADADTAIINAEGGQNNSEEKKEYFI). Thr-436 bears the Phosphothreonine mark. The residue at position 448 (Ser-448) is a Phosphoserine.

It belongs to the nectin family. As to quaternary structure, homodimer (via Ig-like V-type domain). Interacts with FARP1. Interacts (via Ig-like V-type domain) with CRTAM (via Ig-like V-type domain); the interaction competes with CRTAM homodimerization and CADM1 homodimerization. Interacts (via C-terminus) with EPB41L3/DAL1. The interaction with EPB41L3/DAL1 may act to anchor CADM1 to the actin cytoskeleton. Interacts (via C-terminus) with MPP2 (via PDZ domain). Interacts (via C-terminus) with MPP3 (via PDZ domain); this interaction connects CADM1 with DLG1. Interacts (via C-terminus) with PALS2 (via PDZ domain). N-glycosylated. In terms of processing, glycosylation at Asn-70 and Asn-104 promotes adhesive binding and synapse induction. In terms of tissue distribution, expressed dominantly in epithelial cells but not expressed in fibroblast cells (at protein level). Expressed in the T-cell area of lymph nodes, specifically in CD8+ and CD4- CD8- dendritic cells (at protein level). Expressed in CD8+ dendritic cells in the spleen (at protein level). Expressed in CD103+ dendritic cells in the small intestine lamina propria and mesenteric lymph nodes (at protein level). Expressed in brain, lung, kidney, testis, heart, spleen and liver, but not expressed in skeletal muscle.

Its subcellular location is the cell membrane. The protein resides in the synaptic cell membrane. Mediates homophilic cell-cell adhesion in a Ca(2+)-independent manner. Also mediates heterophilic cell-cell adhesion with CADM3 and NECTIN3 in a Ca(2+)-independent manner. Interaction with CRTAM promotes natural killer (NK) cell cytotoxicity and interferon-gamma (IFN-gamma) secretion by CD8+ T-cells in vitro as well as NK cell-mediated rejection of tumors expressing CADM1 in vivo. In mast cells, may mediate attachment to and promote communication with nerves. CADM1, together with MITF, is essential for development and survival of mast cells in vivo. By interacting with CRTAM and thus promoting the adhesion between CD8+ T-cells and CD8+ dendritic cells, regulates the retention of activated CD8+ T-cell within the draining lymph node. Required for the intestinal retention of intraepithelial CD4+ CD8+ T-cells and, to a lesser extent, intraepithelial and lamina propria CD8+ T-cells and CD4+ T-cells. Interaction with CRTAM promotes the adhesion to gut-associated CD103+ dendritic cells, which may facilitate the expression of gut-homing and adhesion molecules on T-cells and the conversion of CD4+ T-cells into CD4+ CD8+ T-cells. Acts as a synaptic cell adhesion molecule and plays a role in the formation of dendritic spines and in synapse assembly. May be involved in neuronal migration, axon growth, pathfinding, and fasciculation on the axons of differentiating neurons. May play diverse roles in the spermatogenesis including in the adhesion of spermatocytes and spermatids to Sertoli cells and for their normal differentiation into mature spermatozoa. In Mus musculus (Mouse), this protein is Cell adhesion molecule 1.